A 455-amino-acid chain; its full sequence is Phosphomethylpyrimidine synthase (455 aa).

Substrate-binding positions include N80, M109, Y139, H175, 195-197 (SRG), 236-239 (DSLR), and E275. H279 is a binding site for Zn(2+). Residue Y302 participates in substrate binding. A Zn(2+)-binding site is contributed by H343. Positions 423, 426, and 431 each coordinate [4Fe-4S] cluster.

This sequence belongs to the ThiC family. [4Fe-4S] cluster is required as a cofactor.

It carries out the reaction 5-amino-1-(5-phospho-beta-D-ribosyl)imidazole + S-adenosyl-L-methionine = 4-amino-2-methyl-5-(phosphooxymethyl)pyrimidine + CO + 5'-deoxyadenosine + formate + L-methionine + 3 H(+). It participates in cofactor biosynthesis; thiamine diphosphate biosynthesis. In terms of biological role, catalyzes the synthesis of the hydroxymethylpyrimidine phosphate (HMP-P) moiety of thiamine from aminoimidazole ribotide (AIR) in a radical S-adenosyl-L-methionine (SAM)-dependent reaction. In Synechococcus sp. (strain JA-2-3B'a(2-13)) (Cyanobacteria bacterium Yellowstone B-Prime), this protein is Phosphomethylpyrimidine synthase.